The following is a 437-amino-acid chain: Transcriptional modulator WTM1 (437 aa).

A WD 1 repeat occupies 103 to 144 (YQGETVSKMAYLDKTGETTLLSMSKNGSLAWFKEGIKVPIHI). Residue Thr187 is modified to Phosphothreonine. Ser200 is subject to Phosphoserine. 3 WD repeats span residues 221-259 (PGTT…KPIW), 264-304 (PKNG…AATT), and 326-366 (AGGD…SKYN). The segment at 368-404 (DDTIAPPQDATEESQTKSLRFLHKGGSRRSPKQIGRR) is disordered. Residue Thr370 is modified to Phosphothreonine. Residues 387-402 (RFLHKGGSRRSPKQIG) are compositionally biased toward basic residues. Thr406 carries the post-translational modification Phosphothreonine.

As to quaternary structure, interacts with KAP122.

It is found in the cytoplasm. The protein resides in the nucleus. Functionally, transcriptional modulator with roles in meiotic regulation and silencing. Acts either as an adapter to facilitate nuclear import by KAP122 of the RNR2-RNR4 heterodimer, also called beta-beta' subunit, which corresponds to the small subunit of the ribonucleotide reductase (RNR); or as an anchor to retain RNR2-RNR4 in the nucleus. The sequence is that of Transcriptional modulator WTM1 (WTM1) from Saccharomyces cerevisiae (strain ATCC 204508 / S288c) (Baker's yeast).